The sequence spans 502 residues: C2H2-type transcription factor MSN2 (502 aa).

2 consecutive C2H2-type zinc fingers follow at residues 385-408 (FVCH…RSLH) and 414-436 (FACG…SRIH).

Its subcellular location is the nucleus. Its function is as follows. Key downstream transcription factor in the HOG1-MAPK pathway. Plays crucial roles in the regulation of growth, conidiation, trap development and fatty acid metabolism. Negatively regulates secondary metabolism such as arthrobotrisins biosynthesis.Also regulates autophagy and endocytosis. This chain is C2H2-type transcription factor MSN2, found in Arthrobotrys oligospora (strain ATCC 24927 / CBS 115.81 / DSM 1491) (Nematode-trapping fungus).